Consider the following 1175-residue polypeptide: Tyrosine-protein phosphatase non-receptor type 21 (1175 aa).

The FERM domain occupies 23 to 308; that stretch reads LVARIQLLNN…ARHKFYRLNQ (286 aa). A compositionally biased stretch (polar residues) spans 395 to 421; the sequence is YSAHSTNSLNTPQPYLQPSPMSSNPSI. The interval 395 to 445 is disordered; that stretch reads YSAHSTNSLNTPQPYLQPSPMSSNPSIPGSDVMRPDYIPSHRHSALIPPSY. Residues Ser577, Ser589, Ser590, Ser637, Ser673, Ser710, Ser711, Ser798, Ser800, and Ser805 each carry the phosphoserine modification. Residues 663 to 702 form a disordered region; it reads DVAPRTFSAGSQSSVFSDKVKQEGTEEQGSGGYSHKKSLS. The region spanning 897–1168 is the Tyrosine-protein phosphatase domain; that stretch reads VFTEYERILK…TFVYRVLIQF (272 aa). Residues Glu1068, 1109–1115, and Gln1153 contribute to the substrate site; that span reads CSAGVGR. Catalysis depends on Cys1109, which acts as the Phosphocysteine intermediate.

The protein belongs to the protein-tyrosine phosphatase family. Non-receptor class subfamily. In terms of tissue distribution, particularly abundantly in adrenal glands.

It localises to the cytoplasm. It is found in the cytoskeleton. The catalysed reaction is O-phospho-L-tyrosyl-[protein] + H2O = L-tyrosyl-[protein] + phosphate. In Rattus norvegicus (Rat), this protein is Tyrosine-protein phosphatase non-receptor type 21 (Ptpn21).